Here is a 179-residue protein sequence, read N- to C-terminus: Peptidyl-tRNA hydrolase 2, mitochondrial (179 aa).

A helical membrane pass occupies residues 10–32 (YLTNPGALSLAAGVACGVCLGWG). Residues lysine 76, lysine 81, lysine 95, lysine 106, lysine 115, lysine 171, and lysine 177 each participate in a glycyl lysine isopeptide (Lys-Gly) (interchain with G-Cter in ubiquitin) cross-link.

This sequence belongs to the PTH2 family. As to quaternary structure, monomer. In terms of processing, ubiquitinated by PRKN during mitophagy, leading to its degradation and enhancement of mitophagy. Deubiquitinated by USP30.

It is found in the mitochondrion outer membrane. It carries out the reaction an N-acyl-L-alpha-aminoacyl-tRNA + H2O = an N-acyl-L-amino acid + a tRNA + H(+). Functionally, peptidyl-tRNA hydrolase which releases tRNAs from the ribosome during protein synthesis. Promotes caspase-independent apoptosis by regulating the function of two transcriptional regulators, AES and TLE1. The chain is Peptidyl-tRNA hydrolase 2, mitochondrial (PTRH2) from Bos taurus (Bovine).